The following is a 360-amino-acid chain: Fe(3+) ions import ATP-binding protein FbpC (360 aa).

One can recognise an ABC transporter domain in the interval leucine 4–leucine 236. ATP is bound at residue glycine 36 to threonine 43.

The protein belongs to the ABC transporter superfamily. Fe(3+) ion importer (TC 3.A.1.10) family. The complex is composed of two ATP-binding proteins (FbpC), two transmembrane proteins (FbpB) and a solute-binding protein (FbpA).

The protein resides in the cell inner membrane. It carries out the reaction Fe(3+)(out) + ATP + H2O = Fe(3+)(in) + ADP + phosphate + H(+). In terms of biological role, part of the ABC transporter complex FbpABC involved in Fe(3+) ions import. Responsible for energy coupling to the transport system. The sequence is that of Fe(3+) ions import ATP-binding protein FbpC from Mesorhizobium japonicum (strain LMG 29417 / CECT 9101 / MAFF 303099) (Mesorhizobium loti (strain MAFF 303099)).